Consider the following 476-residue polypeptide: Siroheme synthase (476 aa).

Positions Met-1–Leu-207 are precorrin-2 dehydrogenase /sirohydrochlorin ferrochelatase. NAD(+) contacts are provided by residues Lys-25 to Val-26 and Pro-46 to Ser-47. Ser-132 carries the phosphoserine modification. A uroporphyrinogen-III C-methyltransferase region spans residues Gly-220 to Leu-476. Asp-252 acts as the Proton acceptor in catalysis. Lys-274 serves as the catalytic Proton donor. Residues Gly-305 to Asp-307, Val-310, Thr-335 to Ala-336, Met-387, and Gly-416 each bind S-adenosyl-L-methionine.

It in the N-terminal section; belongs to the precorrin-2 dehydrogenase / sirohydrochlorin ferrochelatase family. In the C-terminal section; belongs to the precorrin methyltransferase family.

It catalyses the reaction uroporphyrinogen III + 2 S-adenosyl-L-methionine = precorrin-2 + 2 S-adenosyl-L-homocysteine + H(+). It carries out the reaction precorrin-2 + NAD(+) = sirohydrochlorin + NADH + 2 H(+). The enzyme catalyses siroheme + 2 H(+) = sirohydrochlorin + Fe(2+). Its pathway is cofactor biosynthesis; adenosylcobalamin biosynthesis; precorrin-2 from uroporphyrinogen III: step 1/1. It participates in cofactor biosynthesis; adenosylcobalamin biosynthesis; sirohydrochlorin from precorrin-2: step 1/1. The protein operates within porphyrin-containing compound metabolism; siroheme biosynthesis; precorrin-2 from uroporphyrinogen III: step 1/1. It functions in the pathway porphyrin-containing compound metabolism; siroheme biosynthesis; siroheme from sirohydrochlorin: step 1/1. Its pathway is porphyrin-containing compound metabolism; siroheme biosynthesis; sirohydrochlorin from precorrin-2: step 1/1. In terms of biological role, multifunctional enzyme that catalyzes the SAM-dependent methylations of uroporphyrinogen III at position C-2 and C-7 to form precorrin-2 via precorrin-1. Then it catalyzes the NAD-dependent ring dehydrogenation of precorrin-2 to yield sirohydrochlorin. Finally, it catalyzes the ferrochelation of sirohydrochlorin to yield siroheme. This Xylella fastidiosa (strain 9a5c) protein is Siroheme synthase.